The sequence spans 360 residues: Ribosomal RNA large subunit methyltransferase M (360 aa).

S-adenosyl-L-methionine contacts are provided by residues Ser-190, 223–226 (CPGG), Asp-242, Asp-262, and Asp-280. Catalysis depends on Lys-309, which acts as the Proton acceptor.

It belongs to the class I-like SAM-binding methyltransferase superfamily. RNA methyltransferase RlmE family. RlmM subfamily. Monomer.

It is found in the cytoplasm. The catalysed reaction is cytidine(2498) in 23S rRNA + S-adenosyl-L-methionine = 2'-O-methylcytidine(2498) in 23S rRNA + S-adenosyl-L-homocysteine + H(+). Catalyzes the 2'-O-methylation at nucleotide C2498 in 23S rRNA. The polypeptide is Ribosomal RNA large subunit methyltransferase M (Haemophilus ducreyi (strain 35000HP / ATCC 700724)).